The primary structure comprises 860 residues: Pentatricopeptide repeat-containing protein At2g40720 (860 aa).

PPR repeat units lie at residues 59–93, 94–124, 132–166, 167–203, 204–234, 236–270, 271–305, 306–340, 341–371, 372–406, 407–437, 438–472, 475–509, 510–540, 541–575, 576–610, 611–641, 642–676, 677–707, and 713–743; these read SVFT…GWRY, DPFI…WSQS, DVTV…GVRP, DAFS…SLDT, DSFL…IEDK, NVVL…SVKL, VSTS…GLHN, DPYV…RLEI, WNAM…SVLP, DSFT…PIQS, TSTI…MEEK, DMVA…DDSL, DSDI…GLVL, NVFV…MSTE, NMVA…GIFP, DSVS…GIPS, DTHL…MQHK, SLIT…GESP, DDVT…MKQD, and NMEH…MPIE. Residues 748 to 823 are type E motif; sequence IWLCLLSASR…QPGCSWIEVS (76 aa). Residues 824 to 854 are type E(+) motif; it reads DRTNVFFSGGSSSPMKAEIFNVLNRLKSNMV.

Belongs to the PPR family. PCMP-E subfamily.

The chain is Pentatricopeptide repeat-containing protein At2g40720 (PCMP-E26) from Arabidopsis thaliana (Mouse-ear cress).